The primary structure comprises 232 residues: Ubiquinone biosynthesis O-methyltransferase (232 aa).

The S-adenosyl-L-methionine site is built by Arg36, Gly55, Asp76, and Leu120.

It belongs to the methyltransferase superfamily. UbiG/COQ3 family.

It catalyses the reaction a 3-demethylubiquinol + S-adenosyl-L-methionine = a ubiquinol + S-adenosyl-L-homocysteine + H(+). The catalysed reaction is a 3-(all-trans-polyprenyl)benzene-1,2-diol + S-adenosyl-L-methionine = a 2-methoxy-6-(all-trans-polyprenyl)phenol + S-adenosyl-L-homocysteine + H(+). It participates in cofactor biosynthesis; ubiquinone biosynthesis. O-methyltransferase that catalyzes the 2 O-methylation steps in the ubiquinone biosynthetic pathway. In Stutzerimonas stutzeri (strain A1501) (Pseudomonas stutzeri), this protein is Ubiquinone biosynthesis O-methyltransferase.